Reading from the N-terminus, the 579-residue chain is Probable serine/threonine-protein kinase kinY (579 aa).

The segment at Met-1–Ser-24 is disordered. Positions Leu-32–Phe-309 constitute a Protein kinase domain. ATP-binding positions include Ile-38–Val-46 and Lys-59. Asp-167 serves as the catalytic Proton acceptor.

It belongs to the protein kinase superfamily. TKL Ser/Thr protein kinase family.

It carries out the reaction L-seryl-[protein] + ATP = O-phospho-L-seryl-[protein] + ADP + H(+). The enzyme catalyses L-threonyl-[protein] + ATP = O-phospho-L-threonyl-[protein] + ADP + H(+). The polypeptide is Probable serine/threonine-protein kinase kinY (kinY) (Dictyostelium discoideum (Social amoeba)).